We begin with the raw amino-acid sequence, 207 residues long: Guanylate kinase (207 aa).

One can recognise a Guanylate kinase-like domain in the interval 6-185; the sequence is GLLIVLSGPS…AKQRIQSIVE (180 aa). ATP is bound at residue 13 to 20; it reads GPSGVGKG.

The protein belongs to the guanylate kinase family.

The protein localises to the cytoplasm. It carries out the reaction GMP + ATP = GDP + ADP. Functionally, essential for recycling GMP and indirectly, cGMP. The protein is Guanylate kinase of Staphylococcus saprophyticus subsp. saprophyticus (strain ATCC 15305 / DSM 20229 / NCIMB 8711 / NCTC 7292 / S-41).